A 108-amino-acid polypeptide reads, in one-letter code: Ribonuclease P protein component 4 (108 aa).

Positions 67, 70, 93, and 96 each coordinate Zn(2+).

Belongs to the eukaryotic/archaeal RNase P protein component 4 family. Consists of a catalytic RNA component and at least 4-5 protein subunits. Zn(2+) is required as a cofactor.

The protein localises to the cytoplasm. It carries out the reaction Endonucleolytic cleavage of RNA, removing 5'-extranucleotides from tRNA precursor.. Part of ribonuclease P, a protein complex that generates mature tRNA molecules by cleaving their 5'-ends. The sequence is that of Ribonuclease P protein component 4 from Methanococcoides burtonii (strain DSM 6242 / NBRC 107633 / OCM 468 / ACE-M).